The chain runs to 205 residues: Probable thymidylate kinase (205 aa).

Glycine 7–serine 14 provides a ligand contact to ATP.

Belongs to the thymidylate kinase family.

The enzyme catalyses dTMP + ATP = dTDP + ADP. The polypeptide is Probable thymidylate kinase (Methanoculleus marisnigri (strain ATCC 35101 / DSM 1498 / JR1)).